The following is a 512-amino-acid chain: GMP synthase [glutamine-hydrolyzing] (512 aa).

The Glutamine amidotransferase type-1 domain occupies 6–195 (KIIILDFGSQ…VFNICGCQPK (190 aa)). Cysteine 83 acts as the Nucleophile in catalysis. Active-site residues include histidine 169 and glutamate 171. Residues 196–387 (WKITEFISAA…LGIDFKFVYK (192 aa)) enclose the GMPS ATP-PPase domain. ATP is bound at residue 223-229 (SGGVDSS).

Homodimer.

It catalyses the reaction XMP + L-glutamine + ATP + H2O = GMP + L-glutamate + AMP + diphosphate + 2 H(+). It functions in the pathway purine metabolism; GMP biosynthesis; GMP from XMP (L-Gln route): step 1/1. Catalyzes the synthesis of GMP from XMP. The polypeptide is GMP synthase [glutamine-hydrolyzing] (Spiroplasma kunkelii).